A 291-amino-acid chain; its full sequence is POU class 2 homeobox associating-factor 2 (291 aa).

The 23-residue stretch at 7-29 (KRVYQGVRVKHTVKDLLAEKRLR) folds into the OCA domain. A disordered region spans residues 176–219 (AAPVADSPSLAGPDSGSSSPYRLTSGRSGSSIPSSSQPYTLQPL). The span at 200–211 (SGRSGSSIPSSS) shows a compositional bias: low complexity.

It belongs to the POU2AF family.

Its function is as follows. Transcriptional coactivator that may regulate cell type-specific differentiation pathways. This chain is POU class 2 homeobox associating-factor 2 (pou2af2), found in Danio rerio (Zebrafish).